Reading from the N-terminus, the 258-residue chain is Tryptophan synthase alpha chain (258 aa).

Active-site proton acceptor residues include glutamate 50 and aspartate 61.

The protein belongs to the TrpA family. In terms of assembly, tetramer of two alpha and two beta chains.

The catalysed reaction is (1S,2R)-1-C-(indol-3-yl)glycerol 3-phosphate + L-serine = D-glyceraldehyde 3-phosphate + L-tryptophan + H2O. It participates in amino-acid biosynthesis; L-tryptophan biosynthesis; L-tryptophan from chorismate: step 5/5. In terms of biological role, the alpha subunit is responsible for the aldol cleavage of indoleglycerol phosphate to indole and glyceraldehyde 3-phosphate. This chain is Tryptophan synthase alpha chain, found in Clostridium beijerinckii (strain ATCC 51743 / NCIMB 8052) (Clostridium acetobutylicum).